A 116-amino-acid polypeptide reads, in one-letter code: Aspartate 1-decarboxylase (116 aa).

The Schiff-base intermediate with substrate; via pyruvic acid role is filled by S25. A Pyruvic acid (Ser) modification is found at S25. T57 serves as a coordination point for substrate. Y58 functions as the Proton donor in the catalytic mechanism. 73–75 provides a ligand contact to substrate; the sequence is GAA.

The protein belongs to the PanD family. As to quaternary structure, heterooctamer of four alpha and four beta subunits. It depends on pyruvate as a cofactor. Post-translationally, is synthesized initially as an inactive proenzyme, which is activated by self-cleavage at a specific serine bond to produce a beta-subunit with a hydroxyl group at its C-terminus and an alpha-subunit with a pyruvoyl group at its N-terminus.

Its subcellular location is the cytoplasm. The enzyme catalyses L-aspartate + H(+) = beta-alanine + CO2. The protein operates within cofactor biosynthesis; (R)-pantothenate biosynthesis; beta-alanine from L-aspartate: step 1/1. Catalyzes the pyruvoyl-dependent decarboxylation of aspartate to produce beta-alanine. The polypeptide is Aspartate 1-decarboxylase (Christiangramia forsetii (strain DSM 17595 / CGMCC 1.15422 / KT0803) (Gramella forsetii)).